A 322-amino-acid chain; its full sequence is Myeloid-associated differentiation marker (322 aa).

The segment covering Met-1–Ser-18 has biased composition (low complexity). The interval Met-1 to Gly-21 is disordered. Residue Ser-22 is modified to Phosphoserine. MARVEL domains are found at residues Ala-31 to Gly-163 and Tyr-168 to Phe-319. The next 8 helical transmembrane spans lie at Leu-41 to Thr-61, Phe-70 to Leu-90, Phe-101 to Pro-121, Ala-137 to Trp-157, Thr-171 to Ile-191, Leu-203 to Leu-223, Phe-239 to Pro-259, and Leu-294 to Ser-314.

The protein belongs to the MAL family. As to expression, widely expressed. Not detected in thymus.

Its subcellular location is the membrane. In Homo sapiens (Human), this protein is Myeloid-associated differentiation marker (MYADM).